The chain runs to 1241 residues: Plasma membrane calcium-transporting ATPase 4 (1241 aa).

At 1 to 92 (MTNPSDRVLP…NVIPPKKPKT (92 aa)) the chain is on the cytoplasmic side. S13 bears the Phosphoserine mark. A helical transmembrane segment spans residues 93 to 113 (FLELVWEALQDVTLIILEIAA). Residues 114 to 150 (IISLVLSFYRPAGEENELCGQVATTPEDENEAQAGWI) are Extracellular-facing. The helical transmembrane segment at 151–171 (EGAAILFSVIIVVLVTAFNDW) threads the bilayer. Topologically, residues 172–356 (SKEKQFRGLQ…KEKSVLQGKL (185 aa)) are cytoplasmic. Residues 294-318 (EGEKKKKGKKQGVPENRNKAKTQDG) form a disordered region. Position 328 is a phosphoserine (S328). The chain crosses the membrane as a helical span at residues 357–376 (TRLAVQIGKAGLLMSALTVF). The Extracellular portion of the chain corresponds to 377–409 (ILILYFVIDNFVINRRPWLPECTPIYIQYFVKF). A helical membrane pass occupies residues 410 to 427 (FIIGITVLVVAVPEGLPL). The Cytoplasmic portion of the chain corresponds to 428 to 840 (AVTISLAYSV…MWGRNVYDSI (413 aa)). The active-site 4-aspartylphosphate intermediate is D465. Mg(2+) is bound by residues D785 and D789. Residues 841–860 (SKFLQFQLTVNVVAVIVAFT) form a helical membrane-spanning segment. Residues 861–870 (GACITQDSPL) are Extracellular-facing. A helical transmembrane segment spans residues 871–891 (KAVQMLWVNLIMDTFASLALA). The Cytoplasmic segment spans residues 892–911 (TEPPTESLLKRRPYGRNKPL). Residues 912–934 (ISRTMMKNILGHAFYQLIVIFIL) form a helical membrane-spanning segment. Residues 935–952 (VFAGEKFFDIDSGRKAPL) lie on the Extracellular side of the membrane. The helical transmembrane segment at 953–974 (HSPPSQHYTIVFNTFVLMQLFN) threads the bilayer. The Cytoplasmic portion of the chain corresponds to 975 to 993 (EINSRKIHGEKNVFSGIYR). The helical transmembrane segment at 994–1015 (NIIFCSVVLGTFICQIFIVEFG) threads the bilayer. At 1016–1025 (GKPFSCTSLS) the chain is on the extracellular side. The chain crosses the membrane as a helical span at residues 1026–1047 (LSQWLWCLFIGIGELLWGQFIS). Topologically, residues 1048–1241 (AIPTRSLKFL…SSLQSLETSV (194 aa)) are cytoplasmic. A calmodulin-binding subdomain A region spans residues 1086-1103 (LRRGQILWFRGLNRIQTQ). T1102 bears the Phosphothreonine; by PKC mark. The calmodulin-binding subdomain B stretch occupies residues 1104–1113 (IDVINTFQTG).

The protein belongs to the cation transport ATPase (P-type) (TC 3.A.3) family. Type IIB subfamily. Interacts with PDZD11. Interacts with SLC35G1 and STIM1. Interacts with calmodulin. In terms of tissue distribution, isoform XB is the most abundant isoform and is expressed ubiquitously. Isoforms containing segment Z have only been detected in heart, while isoforms containing segment a have been found in heart, stomach and brain cortex.

The protein resides in the cell membrane. The protein localises to the cell projection. It is found in the cilium. Its subcellular location is the flagellum membrane. The enzyme catalyses Ca(2+)(in) + ATP + H2O = Ca(2+)(out) + ADP + phosphate + H(+). With respect to regulation, activated by calcium/calmodulin. In terms of biological role, calcium/calmodulin-regulated and magnesium-dependent enzyme that catalyzes the hydrolysis of ATP coupled with the transport of calcium out of the cell. By regulating sperm cell calcium homeostasis, may play a role in sperm motility. The protein is Plasma membrane calcium-transporting ATPase 4 of Homo sapiens (Human).